A 59-amino-acid polypeptide reads, in one-letter code: UPF0509 protein KPK_3153 (59 aa).

This sequence belongs to the UPF0509 family.

In Klebsiella pneumoniae (strain 342), this protein is UPF0509 protein KPK_3153.